The chain runs to 630 residues: MAAGVAAWLPFARAAAIGWMPVASGPMPAPPRQERKRTQDALIVLNVSGTRFQTWQDTLERYPDTLLGSSERDFFYHPETQQYFFDRDPDIFRHILNFYRTGKLHYPRHECISAYDEELAFFGLIPEIIGDCCYEEYKDRRRENAERLQDDADTDNTCESALPTMTARQRVWRAFENPHTSTMALVFYYVTGFFIAVSVIANVVETVPCGSSPGHIKELPCGERYAVAFFCLDTACVMIFTVEYLLRLAAAPSRYRFVRSVMSIIDVVAILPYYIGLVMTDNEDVSGAFVTLRVFRVFRIFKFSRHSQGLRILGYTLKSCASELGFLLFSLTMAIIIFATVMFYAEKGSSASKFTSIPAAFWYTIVTMTTLGYGDMVPKTIAGKIFGSICSLSGVLVIALPVPVIVSNFSRIYHQNQRADKRRAQKKARLARIRAAKSGSANAYMQSKRNGLLSNQLQSSEEEPAFVSKSGSSFETQHHHLLHCLEKTTNHEFVDEQVFEESCMEVATVNRPSSHSPSLSSQQGVTSTCCSRRHKKTFRIPNANVSGSQRGSVQELSTIQIRCVERTPLSNSRSSLNAKMEECVKLNCEQPYVTTAIISIPTPPVTTPEGDDRPESPEYSGGNIVRVSAL.

The Cytoplasmic portion of the chain corresponds to 1 to 184 (MAAGVAAWLP…FENPHTSTMA (184 aa)). Residues 2-20 (AAGVAAWLPFARAAAIGWM) are interaction with KCNIP1, KCNIP2, and other family members. T38 carries the post-translational modification Phosphothreonine. An interaction with KCNIP1 region spans residues 71–90 (ERDFFYHPETQQYFFDRDPD). Zn(2+) is bound by residues H105, C111, C132, and C133. A helical transmembrane segment spans residues 185–206 (LVFYYVTGFFIAVSVIANVVET). Residues 207-226 (VPCGSSPGHIKELPCGERYA) are Extracellular-facing. A helical membrane pass occupies residues 227-249 (VAFFCLDTACVMIFTVEYLLRLA). Residues 250-256 (AAPSRYR) lie on the Cytoplasmic side of the membrane. The helical transmembrane segment at 257-281 (FVRSVMSIIDVVAILPYYIGLVMTD) threads the bilayer. At 282 to 287 (NEDVSG) the chain is on the extracellular side. A helical; Voltage-sensor transmembrane segment spans residues 288–307 (AFVTLRVFRVFRIFKFSRHS). Residues 308–321 (QGLRILGYTLKSCA) are Cytoplasmic-facing. Residues 308-321 (QGLRILGYTLKSCA) are S4-S5 linker. A helical transmembrane segment spans residues 322 to 345 (SELGFLLFSLTMAIIIFATVMFYA). The Extracellular segment spans residues 346–357 (EKGSSASKFTSI). Positions 358-369 (PAAFWYTIVTMT) form an intramembrane region, helical. Residues T370, L371, G372, and Y373 each coordinate K(+). A Selectivity filter motif is present at residues 370–375 (TLGYGD). An intramembrane segment occupies 370–377 (TLGYGDMV). Topologically, residues 378–380 (PKT) are extracellular. Residues 381–403 (IAGKIFGSICSLSGVLVIALPVP) form a helical membrane-spanning segment. The Cytoplasmic segment spans residues 404–630 (VIVSNFSRIY…GGNIVRVSAL (227 aa)). S438 is modified (phosphoserine). Residues 474–489 (FETQHHHLLHCLEKTT) are required for dendritic targeting. The tract at residues 474–630 (FETQHHHLLH…GGNIVRVSAL (157 aa)) is important for normal channel activation and inactivation, for interaction with KCNIP2, and probably other family members as well. 4 positions are modified to phosphoserine: S548, S552, S572, and S575. The interval 600–623 (IPTPPVTTPEGDDRPESPEYSGGN) is disordered. A phosphothreonine mark is found at T602 and T607. A Phosphoserine modification is found at S616. The short motif at 627 to 630 (VSAL) is the PDZ-binding element.

The protein belongs to the potassium channel family. D (Shal) (TC 1.A.1.2) subfamily. Kv4.2/KCND2 sub-subfamily. Homotetramer or heterotetramer with KCND1 or KCND3. Associates with the regulatory subunits KCNIP1, KCNIP2, KCNIP3 and KCNIP4. Interacts with DPP6, DPP10, DLG4 and DLG1. In vivo, probably exists as heteromeric complex containing variable proportions of KCND1, KCND2, KCND3, KCNIP1, KCNIP2, KCNIP3, KCNIP4, DPP6 and DPP10. The tetrameric channel can associate with up to four regulatory subunits, such as KCNIP2 or KCNIP4. Interaction with KCNIP3 promotes tetramerization and formation of a functional potassium channel. Interaction with four KCNIP4 chains does not reduce interaction with DPP10. Probably part of a complex consisting of KCNIP1, KCNIP2 isoform 3 and KCND2. Interacts with FLNA and FLNC. Interacts with NCS1/FREQ. Identified in a complex with cAMP-dependent protein kinase (PKA), CAV3, AKAP6 and KCND3 in cardiac myocytes. Interacts (via S1 and S2 helices) with DPP6; this interaction stabilizes the conformation of the S1-S2 helices and facilitates S4 conformational change, including S4 sliding up and down, thereby accelerating activation, inactivation, and recovery. Post-translationally, phosphorylation at Ser-438 in response to MAPK activation is increased in stimulated dendrites. Interaction with KCNIP2 and DPP6 propomtes phosphorylation by PKA at Ser-552. Phosphorylation at Ser-552 has no effect on interaction with KCNIP3, but is required for the regulation of channel activity by KCNIP3. Phosphorylation at Ser-552 leads to KCND2 internalization. Phosphorylated by MAPK in response to signaling via the metabotropic glutamate receptor GRM5. Phosphorylation at Ser-616 is required for the down-regulation of neuronal A-type currents in response to signaling via GRM5. In terms of tissue distribution, detected in brain frontal cortex.

It localises to the cell membrane. The protein resides in the cell projection. The protein localises to the dendrite. Its subcellular location is the synapse. It is found in the perikaryon. It localises to the postsynaptic cell membrane. The protein resides in the dendritic spine. The protein localises to the sarcolemma. Its subcellular location is the cell junction. It is found in the membrane. It localises to the caveola. It catalyses the reaction K(+)(in) = K(+)(out). Functionally, voltage-gated potassium channel that mediates transmembrane potassium transport in excitable membranes, primarily in the brain. Mediates the major part of the dendritic A-type current I(SA) in brain neurons. This current is activated at membrane potentials that are below the threshold for action potentials. It regulates neuronal excitability, prolongs the latency before the first spike in a series of action potentials, regulates the frequency of repetitive action potential firing, shortens the duration of action potentials and regulates the back-propagation of action potentials from the neuronal cell body to the dendrites. Contributes to the regulation of the circadian rhythm of action potential firing in suprachiasmatic nucleus neurons, which regulates the circadian rhythm of locomotor activity. Functions downstream of the metabotropic glutamate receptor GRM5 and plays a role in neuronal excitability and in nociception mediated by activation of GRM5. Mediates the transient outward current I(to) in rodent heart left ventricle apex cells, but not in human heart, where this current is mediated by another family member. Forms tetrameric potassium-selective channels through which potassium ions pass in accordance with their electrochemical gradient. The channel alternates between opened and closed conformations in response to the voltage difference across the membrane. Can form functional homotetrameric channels and heterotetrameric channels that contain variable proportions of KCND2 and KCND3; channel properties depend on the type of pore-forming alpha subunits that are part of the channel. In vivo, membranes probably contain a mixture of heteromeric potassium channel complexes. Interaction with specific isoforms of the regulatory subunits KCNIP1, KCNIP2, KCNIP3 or KCNIP4 strongly increases expression at the cell surface and thereby increases channel activity; it modulates the kinetics of channel activation and inactivation, shifts the threshold for channel activation to more negative voltage values, shifts the threshold for inactivation to less negative voltages and accelerates recovery after inactivation. Likewise, interaction with DPP6 or DPP10 promotes expression at the cell membrane and regulates both channel characteristics and activity. Upon depolarization, the channel goes from a resting closed state (C state) to an activated but non-conducting state (C* state), from there, the channel may either inactivate (I state) or open (O state). The sequence is that of A-type voltage-gated potassium channel KCND2 from Oryctolagus cuniculus (Rabbit).